The primary structure comprises 109 residues: UPF0122 protein ABC2295 (109 aa).

This sequence belongs to the UPF0122 family.

In terms of biological role, might take part in the signal recognition particle (SRP) pathway. This is inferred from the conservation of its genetic proximity to ftsY/ffh. May be a regulatory protein. The chain is UPF0122 protein ABC2295 from Shouchella clausii (strain KSM-K16) (Alkalihalobacillus clausii).